Here is a 157-residue protein sequence, read N- to C-terminus: Beta-defensin 125 (157 aa).

Positions 1–20 are cleaved as a signal peptide; sequence MNILMLTFIICGLLTQVTKG. Intrachain disulfides connect C27-C55, C35-C49, and C39-C56. Residues 109-157 are disordered; sequence GETMTPETNTPETTMPPPETTTPETTMPPSETATSETMPPPSQRALTHN. Low complexity-rich tracts occupy residues 110-121 and 129-145; these read ETMTPETNTPET and TTPE…TSET.

This sequence belongs to the beta-defensin family.

It is found in the secreted. Functionally, has antibacterial activity. This Pan troglodytes (Chimpanzee) protein is Beta-defensin 125 (DEFB125).